We begin with the raw amino-acid sequence, 183 residues long: Large ribosomal subunit protein uL10 (183 aa).

The protein belongs to the universal ribosomal protein uL10 family. In terms of assembly, part of the ribosomal stalk of the 50S ribosomal subunit. The N-terminus interacts with L11 and the large rRNA to form the base of the stalk. The C-terminus forms an elongated spine to which L12 dimers bind in a sequential fashion forming a multimeric L10(L12)X complex.

Functionally, forms part of the ribosomal stalk, playing a central role in the interaction of the ribosome with GTP-bound translation factors. In Mesomycoplasma hyopneumoniae (strain 7448) (Mycoplasma hyopneumoniae), this protein is Large ribosomal subunit protein uL10.